The sequence spans 369 residues: D-alanine--D-alanine ligase (369 aa).

Residues 152–359 form the ATP-grasp domain; it reads KKLFAAEGLP…YPSLLATMVE (208 aa). 180-235 contributes to the ATP binding site; the sequence is RERLGLPVFVKPARGGSSIGVSRVSSWDELDAAVAAARDHDPKVIVEAAIAGRELE. 3 residues coordinate Mg(2+): Asp314, Glu326, and Asn328.

This sequence belongs to the D-alanine--D-alanine ligase family. Requires Mg(2+) as cofactor. Mn(2+) is required as a cofactor.

The protein resides in the cytoplasm. The enzyme catalyses 2 D-alanine + ATP = D-alanyl-D-alanine + ADP + phosphate + H(+). Its pathway is cell wall biogenesis; peptidoglycan biosynthesis. Functionally, cell wall formation. The polypeptide is D-alanine--D-alanine ligase (Mycobacterium avium (strain 104)).